A 520-amino-acid polypeptide reads, in one-letter code: Protein nucleotidyltransferase YdiU (520 aa).

ATP contacts are provided by glycine 108, glycine 110, arginine 111, lysine 130, aspartate 142, glycine 143, arginine 193, and arginine 200. Aspartate 269 (proton acceptor) is an active-site residue. Residues asparagine 270 and aspartate 279 each coordinate Mg(2+). Position 279 (aspartate 279) interacts with ATP.

Belongs to the SELO family. The cofactor is Mg(2+). Requires Mn(2+) as cofactor.

It carries out the reaction L-seryl-[protein] + ATP = 3-O-(5'-adenylyl)-L-seryl-[protein] + diphosphate. The catalysed reaction is L-threonyl-[protein] + ATP = 3-O-(5'-adenylyl)-L-threonyl-[protein] + diphosphate. It catalyses the reaction L-tyrosyl-[protein] + ATP = O-(5'-adenylyl)-L-tyrosyl-[protein] + diphosphate. The enzyme catalyses L-histidyl-[protein] + UTP = N(tele)-(5'-uridylyl)-L-histidyl-[protein] + diphosphate. It carries out the reaction L-seryl-[protein] + UTP = O-(5'-uridylyl)-L-seryl-[protein] + diphosphate. The catalysed reaction is L-tyrosyl-[protein] + UTP = O-(5'-uridylyl)-L-tyrosyl-[protein] + diphosphate. In terms of biological role, nucleotidyltransferase involved in the post-translational modification of proteins. It can catalyze the addition of adenosine monophosphate (AMP) or uridine monophosphate (UMP) to a protein, resulting in modifications known as AMPylation and UMPylation. The protein is Protein nucleotidyltransferase YdiU of Cupriavidus pinatubonensis (strain JMP 134 / LMG 1197) (Cupriavidus necator (strain JMP 134)).